The sequence spans 233 residues: MLLWMVLLLCVSMTEAQELFQDPVLSRLNSSETSDLLLKCTTKVDPNKPASELFYSFYKDNHIIQNRSHNPLFFISEANEENSGLYQCVVDAKDGTIQKKSDYLDIDLCTSVSQPVLTLQHEATNLAEGDKVKFLCETQLGSLPILYSFYMDGEILGEPLAPSGRAASLLISVKAEWSGKNYSCQAENKVSRDISEPKKFPLVVSGTASMKSTTVVIWLPVSCLVGWPWLLRF.

The N-terminal stretch at 1–16 is a signal peptide; sequence MLLWMVLLLCVSMTEA. Ig-like domains lie at 23 to 98 and 115 to 195; these read PVLS…GTIQ and PVLT…RDIS. Asparagine 29, asparagine 66, and asparagine 181 each carry an N-linked (GlcNAc...) asparagine glycan. 2 disulfide bridges follow: cysteine 40–cysteine 88 and cysteine 136–cysteine 184. The GPI-anchor amidated glycine moiety is linked to residue glycine 206. A propeptide spans 207 to 233 (removed in mature form); the sequence is TASMKSTTVVIWLPVSCLVGWPWLLRF.

As to expression, NK cells.

Its subcellular location is the cell membrane. The polypeptide is Cell surface glycoprotein gp42 (Rattus norvegicus (Rat)).